We begin with the raw amino-acid sequence, 427 residues long: D-inositol 3-phosphate glycosyltransferase 2 (427 aa).

Residue histidine 14 coordinates 1D-myo-inositol 3-phosphate. Residues 20–21 (QP) and glycine 28 each bind UDP-N-acetyl-alpha-D-glucosamine. Residues 25–30 (DAGGMN), lysine 83, tyrosine 116, threonine 140, and arginine 160 each bind 1D-myo-inositol 3-phosphate. UDP-N-acetyl-alpha-D-glucosamine is bound by residues arginine 234, lysine 239, and valine 300. 3 residues coordinate Mg(2+): tyrosine 309, arginine 310, and alanine 312. 2 residues coordinate UDP-N-acetyl-alpha-D-glucosamine: glutamate 322 and glutamate 330. Threonine 336 lines the Mg(2+) pocket.

The protein belongs to the glycosyltransferase group 1 family. MshA subfamily. In terms of assembly, homodimer.

The enzyme catalyses 1D-myo-inositol 3-phosphate + UDP-N-acetyl-alpha-D-glucosamine = 1D-myo-inositol 2-acetamido-2-deoxy-alpha-D-glucopyranoside 3-phosphate + UDP + H(+). In terms of biological role, catalyzes the transfer of a N-acetyl-glucosamine moiety to 1D-myo-inositol 3-phosphate to produce 1D-myo-inositol 2-acetamido-2-deoxy-glucopyranoside 3-phosphate in the mycothiol biosynthesis pathway. The chain is D-inositol 3-phosphate glycosyltransferase 2 from Catenulispora acidiphila (strain DSM 44928 / JCM 14897 / NBRC 102108 / NRRL B-24433 / ID139908).